The following is a 354-amino-acid chain: S-adenosylmethionine:tRNA ribosyltransferase-isomerase (354 aa).

The protein belongs to the QueA family. In terms of assembly, monomer.

Its subcellular location is the cytoplasm. The enzyme catalyses 7-aminomethyl-7-carbaguanosine(34) in tRNA + S-adenosyl-L-methionine = epoxyqueuosine(34) in tRNA + adenine + L-methionine + 2 H(+). It participates in tRNA modification; tRNA-queuosine biosynthesis. Transfers and isomerizes the ribose moiety from AdoMet to the 7-aminomethyl group of 7-deazaguanine (preQ1-tRNA) to give epoxyqueuosine (oQ-tRNA). This chain is S-adenosylmethionine:tRNA ribosyltransferase-isomerase, found in Dichelobacter nodosus (strain VCS1703A).